The primary structure comprises 194 residues: Protein GrpE (194 aa).

The segment at 1–53 is disordered; it reads MVENEKTSVEETEEKAETEDEMLTEDPSNEDSDEANEEGNELSEEEKRIAELE. Residues 10-44 are compositionally biased toward acidic residues; the sequence is EETEEKAETEDEMLTEDPSNEDSDEANEEGNELSE.

It belongs to the GrpE family. Homodimer.

The protein localises to the cytoplasm. Functionally, participates actively in the response to hyperosmotic and heat shock by preventing the aggregation of stress-denatured proteins, in association with DnaK and GrpE. It is the nucleotide exchange factor for DnaK and may function as a thermosensor. Unfolded proteins bind initially to DnaJ; upon interaction with the DnaJ-bound protein, DnaK hydrolyzes its bound ATP, resulting in the formation of a stable complex. GrpE releases ADP from DnaK; ATP binding to DnaK triggers the release of the substrate protein, thus completing the reaction cycle. Several rounds of ATP-dependent interactions between DnaJ, DnaK and GrpE are required for fully efficient folding. In Halalkalibacterium halodurans (strain ATCC BAA-125 / DSM 18197 / FERM 7344 / JCM 9153 / C-125) (Bacillus halodurans), this protein is Protein GrpE.